The primary structure comprises 367 residues: MSKPHLIIAAGGTGGHMFPAQALSEAMLRKGWRVTLSTDARGARYVGGFSHAVEIREVSSATFTRGGALAKLAVPFRIFGGVLTATARMLREKPDVVVGFGGYPTIPAMAAARLTGRPRMLHEQNGVLGRVNRVFAKHVAHVACGTWPTDVPLGADAIHTGNPVRAAIVERGGAPYTPPGDWPMSLLVFGGSQGARILSDVVPAAIALLPEAIRDLLRIAQQAREEDVDRVQAAYDDLSMRVEVDTFLHDMPRRLSEAQLVICRSGASSVADINVVGRPAIYVPLAIAVRDEQTANARGPVDAGAAVLMPESQLTPETLAQTIEQILTQPDAATQMSIAALSVAVPDATERLVALVETLAAPTPQET.

Residues 13 to 15, Asn-125, Arg-165, Ser-192, and Gln-293 each bind UDP-N-acetyl-alpha-D-glucosamine; that span reads TGG.

It belongs to the glycosyltransferase 28 family. MurG subfamily.

Its subcellular location is the cell inner membrane. It carries out the reaction di-trans,octa-cis-undecaprenyl diphospho-N-acetyl-alpha-D-muramoyl-L-alanyl-D-glutamyl-meso-2,6-diaminopimeloyl-D-alanyl-D-alanine + UDP-N-acetyl-alpha-D-glucosamine = di-trans,octa-cis-undecaprenyl diphospho-[N-acetyl-alpha-D-glucosaminyl-(1-&gt;4)]-N-acetyl-alpha-D-muramoyl-L-alanyl-D-glutamyl-meso-2,6-diaminopimeloyl-D-alanyl-D-alanine + UDP + H(+). The protein operates within cell wall biogenesis; peptidoglycan biosynthesis. In terms of biological role, cell wall formation. Catalyzes the transfer of a GlcNAc subunit on undecaprenyl-pyrophosphoryl-MurNAc-pentapeptide (lipid intermediate I) to form undecaprenyl-pyrophosphoryl-MurNAc-(pentapeptide)GlcNAc (lipid intermediate II). The polypeptide is UDP-N-acetylglucosamine--N-acetylmuramyl-(pentapeptide) pyrophosphoryl-undecaprenol N-acetylglucosamine transferase (Jannaschia sp. (strain CCS1)).